Consider the following 76-residue polypeptide: Frizzled-3 (76 aa).

Over 1 to 5 (YPERP) the chain is Cytoplasmic. A helical transmembrane segment spans residues 6 to 26 (IIFYAVCYMMVSLIFFIGFLL). The Extracellular portion of the chain corresponds to 27-54 (EDRVACNASSPAQYKASTVTQGSHNKAC). A glycan (N-linked (GlcNAc...) asparagine) is linked at asparagine 33. A helical membrane pass occupies residues 55-75 (TMLFMVLYFFTMAGSVWWVIL). Arginine 76 is a topological domain (cytoplasmic).

It belongs to the G-protein coupled receptor Fz/Smo family.

The protein resides in the membrane. It localises to the cell membrane. The protein localises to the cell surface. It is found in the apical cell membrane. Its function is as follows. Receptor for Wnt proteins. Most of frizzled receptors are coupled to the beta-catenin canonical signaling pathway, which leads to the activation of disheveled proteins, inhibition of GSK-3 kinase, nuclear accumulation of beta-catenin and activation of Wnt target genes. A second signaling pathway involving PKC and calcium fluxes has been seen for some family members, but it is not yet clear if it represents a distinct pathway or if it can be integrated in the canonical pathway, as PKC seems to be required for Wnt-mediated inactivation of GSK-3 kinase. Both pathways seem to involve interactions with G-proteins. May be involved in transduction and intercellular transmission of polarity information during tissue morphogenesis and/or in differentiated tissues. Plays a role in controlling early axon growth and guidance processes necessary for the formation of a subset of central and peripheral major fiber tracts. Involved in the migration of cranial neural crest cells. May also be implicated in the transmission of sensory information from the trunk and limbs to the brain. Controls commissural sensory axons guidance after midline crossing along the anterior-posterior axis in the developing spinal cord in a Wnt-dependent signaling pathway. Together with FZD6, is involved in the neural tube closure and plays a role in the regulation of the establishment of planar cell polarity (PCP). Promotes neurogenesis by maintaining sympathetic neuroblasts within the cell cycle in a beta-catenin-dependent manner. In Gallus gallus (Chicken), this protein is Frizzled-3 (FZD3).